The sequence spans 462 residues: Sonic hedgehog protein (462 aa).

An N-terminal signal peptide occupies residues 1 to 23 (MLLLARCLLLVLVSSLLVCSGLA). Cysteine 24 is lipidated: N-palmitoyl cysteine. The short motif at 32 to 38 (KRRHPKK) is the Cardin-Weintraub element. Residues glutamate 89, glutamate 90, aspartate 95, threonine 125, glutamate 126, aspartate 129, and aspartate 131 each contribute to the Ca(2+) site. Positions 140, 147, and 182 each coordinate Zn(2+). Glycine 197 carries Cholesterol glycine ester lipidation. A glycan (N-linked (GlcNAc...) asparagine) is linked at asparagine 278. 2 disordered regions span residues 279-302 (DSATGEPEASSGSGPPSGGALGPR) and 395-414 (TDRGGDSGGGDRGGGGGRVA). Low complexity predominate over residues 283–292 (GEPEASSGSG). Residues 400–412 (DSGGGDRGGGGGR) show a composition bias toward gly residues.

It belongs to the hedgehog family. In terms of assembly, multimer. As to quaternary structure, interacts with HHATL/GUP1 which negatively regulates HHAT-mediated palmitoylation of the SHH N-terminus. Interacts with BOC and CDON. Interacts with HHIP. Interacts with DISP1 via its cholesterol anchor. Interacts with SCUBE2. Interacts with glypican GPC3. In terms of processing, the C-terminal domain displays an autoproteolysis activity and a cholesterol transferase activity. Both activities result in the cleavage of the full-length protein and covalent attachment of a cholesterol moiety to the C-terminal of the newly generated N-terminal fragment (ShhN). Cholesterylation is required for the sonic hedgehog protein N-product targeting to lipid rafts and multimerization. ShhN is the active species in both local and long-range signaling, whereas the C-product (ShhC) is degraded in the endoplasmic reticulum. N-palmitoylation by HHAT of ShhN is required for sonic hedgehog protein N-product multimerization and full activity. It is a prerequisite for the membrane-proximal positioning and the subsequent shedding of this N-terminal peptide. Post-translationally, the lipidated N- and C-terminal peptides of ShhNp can be cleaved (shedding). The N-terminal palmitoylated peptide is cleaved at the Cardin-Weintraub (CW) motif site. The cleavage reduced the interactions with heparan sulfate. The cleavage is enhanced by SCUBE2.

It localises to the endoplasmic reticulum membrane. Its subcellular location is the golgi apparatus membrane. The protein resides in the secreted. The protein localises to the cell membrane. The catalysed reaction is glycyl-L-cysteinyl-[protein] + cholesterol + H(+) = [protein]-C-terminal glycyl cholesterol ester + N-terminal L-cysteinyl-[protein]. In terms of biological role, the C-terminal part of the sonic hedgehog protein precursor displays an autoproteolysis and a cholesterol transferase activity. Both activities result in the cleavage of the full-length protein into two parts (ShhN and ShhC) followed by the covalent attachment of a cholesterol moiety to the C-terminal of the newly generated ShhN. Both activities occur in the endoplasmic reticulum. Once cleaved, ShhC is degraded in the endoplasmic reticulum. Its function is as follows. The dually lipidated sonic hedgehog protein N-product (ShhNp) is a morphogen which is essential for a variety of patterning events during development. Induces ventral cell fate in the neural tube and somites. Involved in the patterning of the anterior-posterior axis of the developing limb bud. Essential for axon guidance. Binds to the patched (PTCH1) receptor, which functions in association with smoothened (SMO), to activate the transcription of target genes. In the absence of SHH, PTCH1 represses the constitutive signaling activity of SMO. This Homo sapiens (Human) protein is Sonic hedgehog protein.